We begin with the raw amino-acid sequence, 88 residues long: ATP synthase subunit 9, mitochondrial (88 aa).

A run of 2 helical transmembrane segments spans residues 8-28 and 45-72; these read IGAGAATIASAGAAIGIGNVF and LFGYAILGFALSELIALFALMMAFLILF.

The protein belongs to the ATPase C chain family. In terms of assembly, F-type ATPases have 2 components, CF(1) - the catalytic core - and CF(0) - the membrane proton channel. CF(1) has five subunits: alpha(3), beta(3), gamma(1), delta(1), epsilon(1). CF(0) has three main subunits: a, b and c.

It is found in the mitochondrion membrane. The enzyme catalyses ATP + H2O + 4 H(+)(in) = ADP + phosphate + 5 H(+)(out). This protein is one of the chains of the nonenzymatic membrane component (F0) of mitochondrial ATPase. This Beta vulgaris (Sugar beet) protein is ATP synthase subunit 9, mitochondrial (ATP9).